The primary structure comprises 505 residues: Histidine ammonia-lyase (505 aa).

The segment at residues 141-143 is a cross-link (5-imidazolinone (Ala-Gly)); sequence ASG. 2,3-didehydroalanine (Ser) is present on Ser-142.

Belongs to the PAL/histidase family. Contains an active site 4-methylidene-imidazol-5-one (MIO), which is formed autocatalytically by cyclization and dehydration of residues Ala-Ser-Gly.

It is found in the cytoplasm. It catalyses the reaction L-histidine = trans-urocanate + NH4(+). It functions in the pathway amino-acid degradation; L-histidine degradation into L-glutamate; N-formimidoyl-L-glutamate from L-histidine: step 1/3. The polypeptide is Histidine ammonia-lyase (Bacillus cereus (strain ATCC 10987 / NRS 248)).